Consider the following 532-residue polypeptide: Copalyl diphosphate synthase (532 aa).

A DXDDTA motif motif is present at residues 313–318 (DTDDTA). Residues 443-449 (QSDDGSW) carry the QXXDGSW motif motif.

Belongs to the terpene synthase family. The cofactor is Mg(2+).

The catalysed reaction is (2E,6E,10E)-geranylgeranyl diphosphate = (+)-copalyl diphosphate. Involved in the biosynthesis of the mercapturic acid derivative diterpene cyslabdan A, a potentiator of the beta-lactam antibiotic imipenem. Catalyzes the conversion of geranylgeranyl diphosphate (GGDP) into (+)-copalyl diphosphate. This chain is Copalyl diphosphate synthase, found in Streptomyces cyslabdanicus.